A 423-amino-acid polypeptide reads, in one-letter code: Serine--tRNA ligase (423 aa).

231–233 (TAE) lines the L-serine pocket. Residue 262–264 (RSE) coordinates ATP. Glu285 lines the L-serine pocket. Residue 349–352 (EIGS) participates in ATP binding. An L-serine-binding site is contributed by Ser385.

This sequence belongs to the class-II aminoacyl-tRNA synthetase family. Type-1 seryl-tRNA synthetase subfamily. In terms of assembly, homodimer. The tRNA molecule binds across the dimer.

The protein localises to the cytoplasm. It carries out the reaction tRNA(Ser) + L-serine + ATP = L-seryl-tRNA(Ser) + AMP + diphosphate + H(+). It catalyses the reaction tRNA(Sec) + L-serine + ATP = L-seryl-tRNA(Sec) + AMP + diphosphate + H(+). Its pathway is aminoacyl-tRNA biosynthesis; selenocysteinyl-tRNA(Sec) biosynthesis; L-seryl-tRNA(Sec) from L-serine and tRNA(Sec): step 1/1. Catalyzes the attachment of serine to tRNA(Ser). Is also able to aminoacylate tRNA(Sec) with serine, to form the misacylated tRNA L-seryl-tRNA(Sec), which will be further converted into selenocysteinyl-tRNA(Sec). This is Serine--tRNA ligase from Acholeplasma laidlawii (strain PG-8A).